The following is a 177-amino-acid chain: ATP synthase subunit b, chloroplastic (177 aa).

Residues 26 to 44 (IINLSIVLFVVIRFLGEAL) traverse the membrane as a helical segment.

This sequence belongs to the ATPase B chain family. In terms of assembly, F-type ATPases have 2 components, F(1) - the catalytic core - and F(0) - the membrane proton channel. F(1) has five subunits: alpha(3), beta(3), gamma(1), delta(1), epsilon(1). F(0) has four main subunits: a(1), b(1), b'(1) and c(10-14). The alpha and beta chains form an alternating ring which encloses part of the gamma chain. F(1) is attached to F(0) by a central stalk formed by the gamma and epsilon chains, while a peripheral stalk is formed by the delta, b and b' chains.

The protein resides in the plastid. Its subcellular location is the chloroplast thylakoid membrane. Functionally, f(1)F(0) ATP synthase produces ATP from ADP in the presence of a proton or sodium gradient. F-type ATPases consist of two structural domains, F(1) containing the extramembraneous catalytic core and F(0) containing the membrane proton channel, linked together by a central stalk and a peripheral stalk. During catalysis, ATP synthesis in the catalytic domain of F(1) is coupled via a rotary mechanism of the central stalk subunits to proton translocation. In terms of biological role, component of the F(0) channel, it forms part of the peripheral stalk, linking F(1) to F(0). The polypeptide is ATP synthase subunit b, chloroplastic (Bigelowiella natans (Pedinomonas minutissima)).